Consider the following 427-residue polypeptide: Glutamate-1-semialdehyde 2,1-aminomutase (427 aa).

Lys265 is modified (N6-(pyridoxal phosphate)lysine).

This sequence belongs to the class-III pyridoxal-phosphate-dependent aminotransferase family. HemL subfamily. As to quaternary structure, homodimer. The cofactor is pyridoxal 5'-phosphate.

Its subcellular location is the cytoplasm. The enzyme catalyses (S)-4-amino-5-oxopentanoate = 5-aminolevulinate. The protein operates within porphyrin-containing compound metabolism; protoporphyrin-IX biosynthesis; 5-aminolevulinate from L-glutamyl-tRNA(Glu): step 2/2. The sequence is that of Glutamate-1-semialdehyde 2,1-aminomutase from Burkholderia vietnamiensis (strain G4 / LMG 22486) (Burkholderia cepacia (strain R1808)).